The sequence spans 312 residues: Peptide methionine sulfoxide reductase MsrA/MsrB 1 (312 aa).

The peptide methionine sulfoxide reductase stretch occupies residues 1-155; sequence MAEIYLAGGC…PSGYCHIDVT (155 aa). Cys-10 is a catalytic residue. In terms of domain architecture, MsrB spans 172–295; sequence QEVLKASLSE…NSASLRFVAK (124 aa). The active-site Nucleophile is the Cys-284.

This sequence in the N-terminal section; belongs to the MsrA Met sulfoxide reductase family. The protein in the C-terminal section; belongs to the MsrB Met sulfoxide reductase family.

The protein localises to the cell membrane. The enzyme catalyses L-methionyl-[protein] + [thioredoxin]-disulfide + H2O = L-methionyl-(S)-S-oxide-[protein] + [thioredoxin]-dithiol. The catalysed reaction is [thioredoxin]-disulfide + L-methionine + H2O = L-methionine (S)-S-oxide + [thioredoxin]-dithiol. It carries out the reaction L-methionyl-[protein] + [thioredoxin]-disulfide + H2O = L-methionyl-(R)-S-oxide-[protein] + [thioredoxin]-dithiol. In terms of biological role, has an important function as a repair enzyme for proteins that have been inactivated by oxidation. Catalyzes the reversible oxidation-reduction of methionine sulfoxide in proteins to methionine. The polypeptide is Peptide methionine sulfoxide reductase MsrA/MsrB 1 (msrAB1) (Streptococcus pneumoniae serotype 4 (strain ATCC BAA-334 / TIGR4)).